Consider the following 255-residue polypeptide: DNA repair protein RecO (255 aa).

Belongs to the RecO family.

Involved in DNA repair and RecF pathway recombination. This is DNA repair protein RecO from Bacillus velezensis (strain DSM 23117 / BGSC 10A6 / LMG 26770 / FZB42) (Bacillus amyloliquefaciens subsp. plantarum).